The following is a 715-amino-acid chain: Lanosterol synthase erg7B (715 aa).

The PFTB 1 repeat unit spans residues Ala111–Gly153. The Proton donor role is filled by Asp445. PFTB repeat units lie at residues Ile550–Gly590 and Val599–Thr640.

The protein belongs to the terpene cyclase/mutase family.

The protein resides in the lipid droplet. It is found in the endoplasmic reticulum membrane. It catalyses the reaction (S)-2,3-epoxysqualene = lanosterol. Its pathway is steroid metabolism; ergosterol biosynthesis. Functionally, lanosterol synthase; part of the third module of ergosterol biosynthesis pathway that includes the late steps of the pathway. ERG7A and ERG7B catalyze the cyclization of (S)-2,3 oxidosqualene to lanosterol, a reaction that forms the sterol core. The third module or late pathway involves the ergosterol synthesis itself through consecutive reactions that mainly occur in the endoplasmic reticulum (ER) membrane. Firstly, the squalene synthase erg9 catalyzes the condensation of 2 farnesyl pyrophosphate moieties to form squalene, which is the precursor of all steroids. Squalene synthase is crucial for balancing the incorporation of farnesyl diphosphate (FPP) into sterol and nonsterol isoprene synthesis. Secondly, squalene is converted into lanosterol by the consecutive action of the squalene epoxidase erg1 and the lanosterol synthase erg7. Then, the delta(24)-sterol C-methyltransferase erg6 methylates lanosterol at C-24 to produce eburicol. Eburicol is the substrate of the sterol 14-alpha demethylase encoded by cyp51A and cyp51B, to yield 4,4,24-trimethyl ergosta-8,14,24(28)-trienol. The C-14 reductase erg24 then reduces the C14=C15 double bond which leads to 4,4-dimethylfecosterol. A sequence of further demethylations at C-4, involving the C-4 demethylation complex containing the C-4 methylsterol oxidases erg25A or erg25B, the sterol-4-alpha-carboxylate 3-dehydrogenase erg26 and the 3-keto-steroid reductase erg27, leads to the production of fecosterol via 4-methylfecosterol. The C-8 sterol isomerase erg2 then catalyzes the reaction which results in unsaturation at C-7 in the B ring of sterols and thus converts fecosterol to episterol. The sterol-C5-desaturase erg3B then catalyzes the introduction of a C-5 double bond in the B ring to produce 5-dehydroepisterol. The 2 other sterol-C5-desaturases, erg3A and erg3C, seem to be less important in ergosterol biosynthesis. The C-22 sterol desaturase erg5 further converts 5-dehydroepisterol into ergosta-5,7,22,24(28)-tetraen-3beta-ol by forming the C-22(23) double bond in the sterol side chain. Finally, ergosta-5,7,22,24(28)-tetraen-3beta-ol is substrate of the C-24(28) sterol reductases erg4A and erg4B to produce ergosterol. Possible alternative sterol biosynthetic pathways might exist from fecosterol to ergosterol, depending on the activities of the erg3 isoforms. This is Lanosterol synthase erg7B from Aspergillus fumigatus (strain ATCC MYA-4609 / CBS 101355 / FGSC A1100 / Af293) (Neosartorya fumigata).